The following is a 609-amino-acid chain: Glutamine--fructose-6-phosphate aminotransferase [isomerizing] (609 aa).

The active-site Nucleophile; for GATase activity is cysteine 2. Residues 2 to 218 (CGIVGAIAQR…EGDIAEITRR (217 aa)) form the Glutamine amidotransferase type-2 domain. 2 consecutive SIS domains span residues 286 to 426 (ADEL…LKGL) and 458 to 599 (LAED…VDQP). The For Fru-6P isomerization activity role is filled by lysine 604.

As to quaternary structure, homodimer.

It localises to the cytoplasm. The enzyme catalyses D-fructose 6-phosphate + L-glutamine = D-glucosamine 6-phosphate + L-glutamate. Catalyzes the first step in hexosamine metabolism, converting fructose-6P into glucosamine-6P using glutamine as a nitrogen source. The protein is Glutamine--fructose-6-phosphate aminotransferase [isomerizing] of Shigella flexneri.